Consider the following 814-residue polypeptide: Immunoglobulin superfamily DCC subclass member 3 (814 aa).

Positions 1 to 35 (MAVQRAASPRRPPAPLWPRLLLPLLLLLLPAPSEG) are cleaved as a signal peptide. Ig-like C2-type domains follow at residues 36–139 (LGHS…ATMS), 140–220 (DFHV…IRIS), 238–321 (PAIL…RTAQ), and 329–416 (PAEF…ARLT). 2 disulfides stabilise this stretch: Cys63/Cys117 and Cys160/Cys209. Asn93 carries an N-linked (GlcNAc...) asparagine glycan. Asn246 carries N-linked (GlcNAc...) asparagine glycosylation. Cystine bridges form between Cys259–Cys307 and Cys351–Cys400. Residues Asn381 and Asn382 are each glycosylated (N-linked (GlcNAc...) asparagine). Fibronectin type-III domains follow at residues 426-520 (PPRN…TLGE) and 523-618 (APPP…ASER). N-linked (GlcNAc...) asparagine glycans are attached at residues Asn580, Asn604, and Asn634. The chain crosses the membrane as a helical span at residues 641–661 (IVIGIHIGVTCIIFCVLFLLF). Disordered stretches follow at residues 722-743 (PPAS…APAP) and 762-814 (GKTT…HSEQ). Positions 770–781 (TEATAPCAGLAA) are enriched in low complexity.

This sequence belongs to the immunoglobulin superfamily. DCC family.

It localises to the membrane. In Homo sapiens (Human), this protein is Immunoglobulin superfamily DCC subclass member 3 (IGDCC3).